The chain runs to 488 residues: Ribulose bisphosphate carboxylase large chain (488 aa).

Substrate is bound by residues N127 and T177. Catalysis depends on K179, which acts as the Proton acceptor. K181 serves as a coordination point for substrate. Positions 205, 207, and 208 each coordinate Mg(2+). N6-carboxylysine is present on K205. The active-site Proton acceptor is H297. Residues R298, H330, and S382 each coordinate substrate.

It belongs to the RuBisCO large chain family. Type I subfamily. As to quaternary structure, heterohexadecamer of 8 large chains and 8 small chains. Mg(2+) serves as cofactor.

Its subcellular location is the plastid. The protein resides in the chloroplast. It carries out the reaction 2 (2R)-3-phosphoglycerate + 2 H(+) = D-ribulose 1,5-bisphosphate + CO2 + H2O. It catalyses the reaction D-ribulose 1,5-bisphosphate + O2 = 2-phosphoglycolate + (2R)-3-phosphoglycerate + 2 H(+). Its function is as follows. RuBisCO catalyzes two reactions: the carboxylation of D-ribulose 1,5-bisphosphate, the primary event in carbon dioxide fixation, as well as the oxidative fragmentation of the pentose substrate in the photorespiration process. Both reactions occur simultaneously and in competition at the same active site. In Cyanidioschyzon merolae (strain NIES-3377 / 10D) (Unicellular red alga), this protein is Ribulose bisphosphate carboxylase large chain.